Reading from the N-terminus, the 302-residue chain is Sulfate adenylyltransferase subunit 2 (302 aa).

This sequence belongs to the PAPS reductase family. CysD subfamily. Heterodimer composed of CysD, the smaller subunit, and CysN.

It catalyses the reaction sulfate + ATP + H(+) = adenosine 5'-phosphosulfate + diphosphate. Its pathway is sulfur metabolism; hydrogen sulfide biosynthesis; sulfite from sulfate: step 1/3. Functionally, with CysN forms the ATP sulfurylase (ATPS) that catalyzes the adenylation of sulfate producing adenosine 5'-phosphosulfate (APS) and diphosphate, the first enzymatic step in sulfur assimilation pathway. APS synthesis involves the formation of a high-energy phosphoric-sulfuric acid anhydride bond driven by GTP hydrolysis by CysN coupled to ATP hydrolysis by CysD. The sequence is that of Sulfate adenylyltransferase subunit 2 from Escherichia coli O9:H4 (strain HS).